A 230-amino-acid chain; its full sequence is Large ribosomal subunit protein uL1 (230 aa).

It belongs to the universal ribosomal protein uL1 family. Part of the 50S ribosomal subunit.

In terms of biological role, binds directly to 23S rRNA. The L1 stalk is quite mobile in the ribosome, and is involved in E site tRNA release. Its function is as follows. Protein L1 is also a translational repressor protein, it controls the translation of the L11 operon by binding to its mRNA. This is Large ribosomal subunit protein uL1 from Thermoanaerobacter sp. (strain X514).